The primary structure comprises 153 residues: NADPH-dependent 7-cyano-7-deazaguanine reductase (153 aa).

The active-site Thioimide intermediate is the Cys-51. The Proton donor role is filled by Asp-58. Substrate-binding positions include 73 to 75 and 92 to 93; these read VES and HE.

Belongs to the GTP cyclohydrolase I family. QueF type 1 subfamily.

The protein resides in the cytoplasm. It carries out the reaction 7-aminomethyl-7-carbaguanine + 2 NADP(+) = 7-cyano-7-deazaguanine + 2 NADPH + 3 H(+). The protein operates within tRNA modification; tRNA-queuosine biosynthesis. Catalyzes the NADPH-dependent reduction of 7-cyano-7-deazaguanine (preQ0) to 7-aminomethyl-7-deazaguanine (preQ1). This is NADPH-dependent 7-cyano-7-deazaguanine reductase from Granulibacter bethesdensis (strain ATCC BAA-1260 / CGDNIH1).